An 84-amino-acid chain; its full sequence is Large ribosomal subunit protein bL31B (84 aa).

Belongs to the bacterial ribosomal protein bL31 family. Type B subfamily. Part of the 50S ribosomal subunit.

In Rhodococcus erythropolis (strain PR4 / NBRC 100887), this protein is Large ribosomal subunit protein bL31B.